Consider the following 500-residue polypeptide: Cytochrome P450 2D20 (500 aa).

Heme is bound at residue Cys446.

This sequence belongs to the cytochrome P450 family. Heme serves as cofactor.

Its subcellular location is the endoplasmic reticulum membrane. The protein localises to the microsome membrane. The chain is Cytochrome P450 2D20 (CYP2D20) from Mesocricetus auratus (Golden hamster).